The following is a 255-amino-acid chain: Hydroxyacylglutathione hydrolase (255 aa).

Zn(2+) contacts are provided by histidine 56, histidine 58, aspartate 60, histidine 61, histidine 114, aspartate 133, and histidine 171.

This sequence belongs to the metallo-beta-lactamase superfamily. Glyoxalase II family. Monomer. Requires Zn(2+) as cofactor.

It carries out the reaction an S-(2-hydroxyacyl)glutathione + H2O = a 2-hydroxy carboxylate + glutathione + H(+). The protein operates within secondary metabolite metabolism; methylglyoxal degradation; (R)-lactate from methylglyoxal: step 2/2. In terms of biological role, thiolesterase that catalyzes the hydrolysis of S-D-lactoyl-glutathione to form glutathione and D-lactic acid. This Rhodopseudomonas palustris (strain BisB5) protein is Hydroxyacylglutathione hydrolase.